A 476-amino-acid polypeptide reads, in one-letter code: Bifunctional protein GlmU (476 aa).

Positions 1-232 (MGDLAAIILA…PVEVMGVNDR (232 aa)) are pyrophosphorylase. UDP-N-acetyl-alpha-D-glucosamine-binding positions include 9 to 12 (LAAG), lysine 23, glutamine 75, and 80 to 81 (GT). Aspartate 105 provides a ligand contact to Mg(2+). Residues glycine 142, glutamate 157, asparagine 172, and asparagine 230 each coordinate UDP-N-acetyl-alpha-D-glucosamine. Asparagine 230 is a binding site for Mg(2+). The tract at residues 233–253 (AQLAEAGRFARQRINRELMLD) is linker. The segment at 254–476 (GVTIVDPAAT…DGWKLKQRDQ (223 aa)) is N-acetyltransferase. The UDP-N-acetyl-alpha-D-glucosamine site is built by arginine 353 and lysine 371. The active-site Proton acceptor is histidine 383. UDP-N-acetyl-alpha-D-glucosamine is bound by residues tyrosine 386 and asparagine 397. Acetyl-CoA-binding positions include 406-407 (NY), serine 425, alanine 443, and arginine 460.

In the N-terminal section; belongs to the N-acetylglucosamine-1-phosphate uridyltransferase family. It in the C-terminal section; belongs to the transferase hexapeptide repeat family. Homotrimer. It depends on Mg(2+) as a cofactor.

Its subcellular location is the cytoplasm. The enzyme catalyses alpha-D-glucosamine 1-phosphate + acetyl-CoA = N-acetyl-alpha-D-glucosamine 1-phosphate + CoA + H(+). It carries out the reaction N-acetyl-alpha-D-glucosamine 1-phosphate + UTP + H(+) = UDP-N-acetyl-alpha-D-glucosamine + diphosphate. It participates in nucleotide-sugar biosynthesis; UDP-N-acetyl-alpha-D-glucosamine biosynthesis; N-acetyl-alpha-D-glucosamine 1-phosphate from alpha-D-glucosamine 6-phosphate (route II): step 2/2. Its pathway is nucleotide-sugar biosynthesis; UDP-N-acetyl-alpha-D-glucosamine biosynthesis; UDP-N-acetyl-alpha-D-glucosamine from N-acetyl-alpha-D-glucosamine 1-phosphate: step 1/1. The protein operates within bacterial outer membrane biogenesis; LPS lipid A biosynthesis. Catalyzes the last two sequential reactions in the de novo biosynthetic pathway for UDP-N-acetylglucosamine (UDP-GlcNAc). The C-terminal domain catalyzes the transfer of acetyl group from acetyl coenzyme A to glucosamine-1-phosphate (GlcN-1-P) to produce N-acetylglucosamine-1-phosphate (GlcNAc-1-P), which is converted into UDP-GlcNAc by the transfer of uridine 5-monophosphate (from uridine 5-triphosphate), a reaction catalyzed by the N-terminal domain. This is Bifunctional protein GlmU from Geobacter metallireducens (strain ATCC 53774 / DSM 7210 / GS-15).